Reading from the N-terminus, the 1701-residue chain is Coiled-coil domain-containing protein 180 (1701 aa).

The disordered stretch occupies residues 1 to 35 (MRGGENRPPARVQSSSEELELRHQSLDAFPGRRLP). The stretch at 171–198 (QRQAEHKRKSYESALASFQEEIAQVGKE) forms a coiled coil. Disordered regions lie at residues 657–808 (EKPS…DKEE), 1272–1291 (HHCD…CGSR), and 1319–1354 (GFKR…KPNK). The span at 661 to 671 (QKRVKKLRKKQ) shows a compositional bias: basic residues. Residues 672-682 (GSKEDMTRSEE) show a composition bias toward basic and acidic residues. Residues 683-692 (SISSGTSTAR) show a composition bias toward polar residues. The segment covering 696-705 (EVEEENDQEM) has biased composition (acidic residues). Basic and acidic residues predominate over residues 755 to 766 (ENVKGQGEKKEE). A coiled-coil region spans residues 757-804 (VKGQGEKKEESEEEDEKEEEEEEEKLEEEKEEKEAQEEQESLSVGEEE). Positions 767–808 (SEEEDEKEEEEEEEKLEEEKEEKEAQEEQESLSVGEEEDKEE) are enriched in acidic residues.

The protein is Coiled-coil domain-containing protein 180 (CCDC180) of Homo sapiens (Human).